A 250-amino-acid chain; its full sequence is 2,3-bisphosphoglycerate-dependent phosphoglycerate mutase (250 aa).

Residues arginine 12–asparagine 19, threonine 25–glycine 26, arginine 64, glutamate 91–tyrosine 94, lysine 102, arginine 118–arginine 119, and glycine 185–asparagine 186 each bind substrate. Histidine 13 functions as the Tele-phosphohistidine intermediate in the catalytic mechanism. Glutamate 91 acts as the Proton donor/acceptor in catalysis.

This sequence belongs to the phosphoglycerate mutase family. BPG-dependent PGAM subfamily.

The enzyme catalyses (2R)-2-phosphoglycerate = (2R)-3-phosphoglycerate. It functions in the pathway carbohydrate degradation; glycolysis; pyruvate from D-glyceraldehyde 3-phosphate: step 3/5. Its function is as follows. Catalyzes the interconversion of 2-phosphoglycerate and 3-phosphoglycerate. The sequence is that of 2,3-bisphosphoglycerate-dependent phosphoglycerate mutase from Corynebacterium efficiens (strain DSM 44549 / YS-314 / AJ 12310 / JCM 11189 / NBRC 100395).